The chain runs to 96 residues: UPF0235 protein YPN_3141 (96 aa).

This sequence belongs to the UPF0235 family.

The polypeptide is UPF0235 protein YPN_3141 (Yersinia pestis bv. Antiqua (strain Nepal516)).